We begin with the raw amino-acid sequence, 339 residues long: Tetraacyldisaccharide 4'-kinase (339 aa).

ATP is bound at residue 58–65 (NVGGVGKT).

Belongs to the LpxK family.

The catalysed reaction is a lipid A disaccharide + ATP = a lipid IVA + ADP + H(+). The protein operates within glycolipid biosynthesis; lipid IV(A) biosynthesis; lipid IV(A) from (3R)-3-hydroxytetradecanoyl-[acyl-carrier-protein] and UDP-N-acetyl-alpha-D-glucosamine: step 6/6. Its function is as follows. Transfers the gamma-phosphate of ATP to the 4'-position of a tetraacyldisaccharide 1-phosphate intermediate (termed DS-1-P) to form tetraacyldisaccharide 1,4'-bis-phosphate (lipid IVA). The chain is Tetraacyldisaccharide 4'-kinase from Chromobacterium violaceum (strain ATCC 12472 / DSM 30191 / JCM 1249 / CCUG 213 / NBRC 12614 / NCIMB 9131 / NCTC 9757 / MK).